The chain runs to 186 residues: Peptide deformylase (186 aa).

Fe cation contacts are provided by cysteine 113 and histidine 156. The active site involves glutamate 157. Position 160 (histidine 160) interacts with Fe cation.

The protein belongs to the polypeptide deformylase family. Requires Fe(2+) as cofactor.

It carries out the reaction N-terminal N-formyl-L-methionyl-[peptide] + H2O = N-terminal L-methionyl-[peptide] + formate. Removes the formyl group from the N-terminal Met of newly synthesized proteins. Requires at least a dipeptide for an efficient rate of reaction. N-terminal L-methionine is a prerequisite for activity but the enzyme has broad specificity at other positions. The sequence is that of Peptide deformylase from Levilactobacillus brevis (strain ATCC 367 / BCRC 12310 / CIP 105137 / JCM 1170 / LMG 11437 / NCIMB 947 / NCTC 947) (Lactobacillus brevis).